The primary structure comprises 2150 residues: Hybrid signal transduction histidine kinase A (2150 aa).

A compositionally biased stretch (basic and acidic residues) spans 1-10; the sequence is MELKTFKDLN. 8 disordered regions span residues 1 to 41, 68 to 149, 184 to 267, 286 to 323, 339 to 359, 415 to 505, 520 to 546, and 560 to 733; these read MELK…QQQQ, HIPQ…YYYS, NSSS…HQRR, KNKPLSSSTPSTVNTCGAVNNNSNNNNNNNNNSTGSLG, TEESTGGNNSPRSNCGSNCGS, NNNN…NSPR, SLTSSNNNNQSNNNTNPSINNNNGRNG, and KPVV…NGAT. The segment covering 19–32 has biased composition (polar residues); the sequence is PVINTGDQPNPLRT. Residues 68–81 are compositionally biased toward low complexity; the sequence is HIPQQLYQKQQQQQ. A compositionally biased stretch (polar residues) spans 82 to 104; the sequence is HSHSYGNHSFIHNVSPTSPSYDI. Low complexity-rich tracts occupy residues 105–145 and 184–244; these read NNNN…YNNN and NSSS…NNNI. The span at 289 to 304 shows a compositional bias: polar residues; sequence PLSSSTPSTVNTCGAV. Low complexity-rich tracts occupy residues 305–318, 344–359, and 415–447; these read NNNSNNNNNNNNNS, GGNNSPRSNCGSNCGS, and NNNNNNINPNNNPNNSNNSNNNVSPRNNNHNIS. Polar residues predominate over residues 448–468; it reads PRGSNISPRSNNGGSTTISPR. Composition is skewed to low complexity over residues 469-485, 520-545, and 565-600; these read NISNNNNIINNINNNNI, SLTSSNNNNQSNNNTNPSINNNNGRN, and NNGNNNNNNNTNNSTTSNNNITTNNNNNNNNNINNN. Over residues 614-628 the composition is skewed to polar residues; it reads SKTNSLQDFETSSMN. Residues 657 to 727 are compositionally biased toward low complexity; the sequence is NSNNTNSNNS…NNNNNNNNNN (71 aa). Residues 772 to 792 form a helical membrane-spanning segment; sequence AIILGLFIVGSSISILATLVL. The CHASE domain maps to 838 to 1082; sequence STSEDQFVPF…NVGGRNWMIA (245 aa). The helical transmembrane segment at 1098–1118 threads the bilayer; that stretch reads PYAIGGVCMLLSALVSFWFAV. Residues 1139–1164 are a coiled coil; the sequence is NRKLAEKALAESQERLELAMEGSEDA. Disordered regions lie at residues 1209–1228 and 1233–1252; these read LNFKGDSKNGGSNNGTFNLF and VDSSSPQSITNVNTTNGGGG. A PAS domain is found at 1235-1317; that stretch reads SSSPQSITNV…SEIKKTITRE (83 aa). A PAC domain is found at 1321-1376; it reads MEIECRMRKKYGGYLYIIMRGKVVSNETSFKDNSLRMAGTLRDMTSRKDMQRLILE. The Histidine kinase domain maps to 1393-1620; that stretch reads TVSHEVRTPL…KFKCIIPFLL (228 aa). Residue His1396 is modified to Phosphohistidine; by autocatalysis. 3 disordered regions span residues 1874–1893, 1933–1952, and 1962–2017; these read GGGSNTMNGSSGNLSNNNNF, HGNQQQQLYQQQQQQQNNSS, and QNNN…DTPV. Composition is skewed to low complexity over residues 1878–1893, 1935–1952, and 1962–2002; these read NTMNGSSGNLSNNNNF, NQQQQLYQQQQQQQNNSS, and QNNN…TPTL. Residues 2026 to 2146 form the Response regulatory domain; sequence KALIVEDNEL…TLKDALAKWG (121 aa). At Asp2076 the chain carries 4-aspartylphosphate.

In terms of assembly, interacts with SDF-2, an acbA peptide involved in sporulation.

It is found in the cell membrane. It carries out the reaction ATP + protein L-histidine = ADP + protein N-phospho-L-histidine.. In terms of biological role, acts as a receptor histidine kinase for the cytokinin SDF-2 in a signal transduction pathway that regulates prestalk gene expression and controls terminal differentiation of prespore cells. Binding of SDF-2 to this protein inhibits phosphorelay and induces rapid sporulation. This protein undergoes an ATP-dependent autophosphorylation at a conserved histidine residue in the kinase core, and a phosphoryl group is then transferred to a conserved aspartate residue in the receiver domain. The polypeptide is Hybrid signal transduction histidine kinase A (dhkA) (Dictyostelium discoideum (Social amoeba)).